A 124-amino-acid polypeptide reads, in one-letter code: Small ribosomal subunit protein bS6 (124 aa).

The interval 96 to 124 (ETGPSPMMKEVQREEAKKAAAAQPTEAQA) is disordered. Over residues 114–124 (AAAAQPTEAQA) the composition is skewed to low complexity.

This sequence belongs to the bacterial ribosomal protein bS6 family.

Its function is as follows. Binds together with bS18 to 16S ribosomal RNA. The sequence is that of Small ribosomal subunit protein bS6 from Burkholderia lata (strain ATCC 17760 / DSM 23089 / LMG 22485 / NCIMB 9086 / R18194 / 383).